The sequence spans 146 residues: Hemoglobin subunit beta (146 aa).

An N-acetylvaline modification is found at Val-1. Residues 2 to 146 enclose the Globin domain; the sequence is HLTGEEKSAV…VANALAHKYH (145 aa). Thr-12 carries the phosphothreonine modification. Phosphoserine is present on Ser-44. Lys-59 carries the post-translational modification N6-acetyllysine. His-63 contributes to the heme b binding site. Lys-82 is subject to N6-acetyllysine. His-92 contributes to the heme b binding site. Position 93 is an S-nitrosocysteine (Cys-93). Lys-144 bears the N6-acetyllysine mark.

It belongs to the globin family. As to quaternary structure, heterotetramer of two alpha chains and two beta chains. Red blood cells.

In terms of biological role, involved in oxygen transport from the lung to the various peripheral tissues. The sequence is that of Hemoglobin subunit beta (HBB) from Nycticebus coucang (Slow loris).